The chain runs to 97 residues: Co-chaperonin GroES (97 aa).

It belongs to the GroES chaperonin family. In terms of assembly, heptamer of 7 subunits arranged in a ring. Interacts with the chaperonin GroEL.

It localises to the cytoplasm. Its function is as follows. Together with the chaperonin GroEL, plays an essential role in assisting protein folding. The GroEL-GroES system forms a nano-cage that allows encapsulation of the non-native substrate proteins and provides a physical environment optimized to promote and accelerate protein folding. GroES binds to the apical surface of the GroEL ring, thereby capping the opening of the GroEL channel. This chain is Co-chaperonin GroES, found in Buchnera aphidicola subsp. Pterocomma populeum.